Here is an 81-residue protein sequence, read N- to C-terminus: Sulfur carrier protein TusA (81 aa).

Cysteine 19 (cysteine persulfide intermediate) is an active-site residue.

Belongs to the sulfur carrier protein TusA family. As to quaternary structure, interacts with IscS.

The protein localises to the cytoplasm. It functions in the pathway tRNA modification. Its function is as follows. Sulfur carrier protein involved in sulfur trafficking in the cell. Part of a sulfur-relay system required for 2-thiolation during synthesis of 2-thiouridine of the modified wobble base 5-methylaminomethyl-2-thiouridine (mnm(5)s(2)U) in tRNA. Interacts with IscS and stimulates its cysteine desulfurase activity. Accepts an activated sulfur from IscS, which is then transferred to TusD, and thus determines the direction of sulfur flow from IscS to 2-thiouridine formation. Also appears to be involved in sulfur transfer for the biosynthesis of molybdopterin. The protein is Sulfur carrier protein TusA of Pectobacterium atrosepticum (strain SCRI 1043 / ATCC BAA-672) (Erwinia carotovora subsp. atroseptica).